The primary structure comprises 468 residues: Glucose transport protein (468 aa).

The Cytoplasmic portion of the chain corresponds to 1 to 17 (MNPSSSPSQSTANVKFV). Residues 18–38 (LLISGVAALGGFLFGFDTAVI) traverse the membrane as a helical segment. Over 39–58 (NGAVAALQKHFQTDSLLTGL) the chain is Extracellular. A helical transmembrane segment spans residues 59–78 (SVSLALLGSALGAFGAGPIA). Over 79 to 84 (DRHGRI) the chain is Cytoplasmic. The chain crosses the membrane as a helical span at residues 85 to 105 (KTMILAAVLFTLSSIGSGLPF). Residues 106-114 (TIWDFIFWR) lie on the Extracellular side of the membrane. The chain crosses the membrane as a helical span at residues 115 to 135 (VLGGIGVGAASVIAPAYIAEV). Residues 136–149 (SPAHLRGRLGSLQQ) lie on the Cytoplasmic side of the membrane. Residues 150–170 (LAIVSGIFIALLSNWFIALMA) traverse the membrane as a helical segment. The Extracellular portion of the chain corresponds to 171–186 (GGSAQNPWLFGAAAWR). Residues 187 to 207 (WMFWTELIPALLYGVCAFLIP) traverse the membrane as a helical segment. The Cytoplasmic segment spans residues 208 to 265 (ESPRYLVAQGQGEKAAAILWKVEGGDVPSRIEEIQATVSLDHKPRFSDLLSRRGGLLP). A helical transmembrane segment spans residues 266–286 (IVWIGMGLSALQQFVGINVIF). Residues 287–307 (YYSSVLWRSVGFTEEKSLLIT) are Extracellular-facing. Residues 308–328 (VITGFINILTTLVAIAFVDKF) traverse the membrane as a helical segment. Topologically, residues 329 to 331 (GRK) are cytoplasmic. Residues 332–352 (PLLLMGSIGMTITLGILSVVF) form a helical membrane-spanning segment. The Extracellular portion of the chain corresponds to 353–366 (GGATVVNGQPTLTG). A helical transmembrane segment spans residues 367-387 (AAGIIALVTANLYVFSFGFSW). Residues 388–412 (GPIVWVLLGEMFNNKIRAAALSVAA) lie on the Cytoplasmic side of the membrane. Residues 413–433 (GVQWIANFIISTTFPPLLDTV) form a helical membrane-spanning segment. Residues 434 to 436 (GLG) lie on the Extracellular side of the membrane. A helical transmembrane segment spans residues 437–457 (PAYGLYATSAAISIFFIWFFV). Topologically, residues 458–468 (KETKGKTLEQM) are cytoplasmic.

It belongs to the major facilitator superfamily. Sugar transporter (TC 2.A.1.1) family.

Its subcellular location is the cell membrane. The protein is Glucose transport protein (gtr) of Synechocystis sp. (strain ATCC 27184 / PCC 6803 / Kazusa).